Reading from the N-terminus, the 117-residue chain is Large ribosomal subunit protein uL18 (117 aa).

The protein belongs to the universal ribosomal protein uL18 family. As to quaternary structure, part of the 50S ribosomal subunit; part of the 5S rRNA/L5/L18/L25 subcomplex. Contacts the 5S and 23S rRNAs.

Functionally, this is one of the proteins that bind and probably mediate the attachment of the 5S RNA into the large ribosomal subunit, where it forms part of the central protuberance. The sequence is that of Large ribosomal subunit protein uL18 from Cronobacter sakazakii (strain ATCC BAA-894) (Enterobacter sakazakii).